The chain runs to 238 residues: Ribonuclease PH (238 aa).

Phosphate is bound by residues R86 and 124–126 (GTR).

The protein belongs to the RNase PH family. In terms of assembly, homohexameric ring arranged as a trimer of dimers.

The enzyme catalyses tRNA(n+1) + phosphate = tRNA(n) + a ribonucleoside 5'-diphosphate. Its function is as follows. Phosphorolytic 3'-5' exoribonuclease that plays an important role in tRNA 3'-end maturation. Removes nucleotide residues following the 3'-CCA terminus of tRNAs; can also add nucleotides to the ends of RNA molecules by using nucleoside diphosphates as substrates, but this may not be physiologically important. Probably plays a role in initiation of 16S rRNA degradation (leading to ribosome degradation) during starvation. In Maricaulis maris (strain MCS10) (Caulobacter maris), this protein is Ribonuclease PH.